The sequence spans 1107 residues: DNA polymerase delta catalytic subunit (1107 aa).

The interval 1 to 34 (MDGKRRPGPGPGVPPKRARGGLWDDDDAPRPSQF) is disordered. The short motif at 4-19 (KRRPGPGPGVPPKRAR) is the Nuclear localization signal element. An Omega-N-methylarginine modification is found at Arg-19. Lys-574 participates in a covalent cross-link: Glycyl lysine isopeptide (Lys-Gly) (interchain with G-Cter in SUMO2). Zn(2+) contacts are provided by Cys-1012, Cys-1015, Cys-1026, and Cys-1029. Residues 1012 to 1029 (CIGCRTVLSHQGAVCEFC) form a CysA-type zinc finger. [4Fe-4S] cluster contacts are provided by Cys-1058, Cys-1061, Cys-1071, and Cys-1076. Positions 1058 to 1076 (CQRCQGSLHEDVICTSRDC) match the CysB motif motif.

It belongs to the DNA polymerase type-B family. As to quaternary structure, component of the tetrameric DNA polymerase delta complex (Pol-delta4), which consists of POLD1/p125, POLD2/p50, POLD3/p66/p68 and POLD4/p12, with POLD1 bearing both DNA polymerase and 3' to 5' proofreading exonuclease activities. Within Pol-delta4, directly interacts with POLD2 and POLD4. Following genotoxic stress by DNA-damaging agents, such as ultraviolet light and methyl methanesulfonate, or by replication stress induced by treatment with hydroxyurea or aphidicolin, Pol-delta4 is converted into a trimeric form of the complex (Pol-delta3) by POLD4 degradation. Pol-delta3 is the major form at S phase replication sites and DNA damage sites. POLD1 displays different catalytic properties depending upon the complex it is found in. It exhibits higher proofreading activity and fidelity than Pol-delta4, making it particularly well suited to respond to DNA damage. Directly interacts with PCNA, as do POLD3 and POLD4; this interaction stimulates Pol-delta4 polymerase activity. As POLD2 and POLD4, directly interacts with WRNIP1; this interaction stimulates DNA polymerase delta-mediated DNA synthesis, independently of the presence of PCNA. This stimulation may be due predominantly to an increase of initiation frequency and also to increased processivity. Also observed as a dimeric complex with POLD2 (Pol-delta2 complex). Pol-delta2 is relatively insensitive to the PCNA stimulation (2-5-fold) compared to Pol-delta4 that is stimulated by over 50-fold. The DNA polymerase delta complex interacts with POLDIP2; this interaction is probably mediated through direct binding to POLD2. Interacts with CIAO1. Interacts with POLDIP2. Interacts with RFC1. [4Fe-4S] cluster is required as a cofactor. Widely expressed, with high levels of expression in heart and lung.

It is found in the nucleus. It carries out the reaction DNA(n) + a 2'-deoxyribonucleoside 5'-triphosphate = DNA(n+1) + diphosphate. Its activity is regulated as follows. Regulated by alteration of quaternary structure. Exhibits burst rates of DNA synthesis are about 5 times faster in the presence of POLD4 (Pol-delta4 complex) than in its absence (Pol-delta3 complex), while the affinity of the enzyme for its DNA and dNTP substrates appears unchanged. The Pol-delta3 complex is more likely to proofread DNA synthesis because it cleaves single-stranded DNA twice as fast and transfers mismatched DNA from the polymerase to the exonuclease sites 9 times faster compared to the Pol-delta3 complex. Pol-delta3 also extends mismatched primers 3 times more slowly in the absence of POLD4. The conversion of Pol-delta4 into Pol-delta3 is induced by genotoxic stress or by replication stress leading POLD4 degradation. Stimulated in the presence of PCNA. This stimulation is further increased in the presence of KCTD13/PDIP1, most probably via direct interaction between KCTD13 and POLD2. Its function is as follows. As the catalytic component of the trimeric (Pol-delta3 complex) and tetrameric DNA polymerase delta complexes (Pol-delta4 complex), plays a crucial role in high fidelity genome replication, including in lagging strand synthesis, and repair. Exhibits both DNA polymerase and 3'- to 5'-exonuclease activities. Requires the presence of accessory proteins POLD2, POLD3 and POLD4 for full activity. Depending upon the absence (Pol-delta3) or the presence of POLD4 (Pol-delta4), displays differences in catalytic activity. Most notably, expresses higher proofreading activity in the context of Pol-delta3 compared with that of Pol-delta4. Although both Pol-delta3 and Pol-delta4 process Okazaki fragments in vitro, Pol-delta3 may be better suited to fulfill this task, exhibiting near-absence of strand displacement activity compared to Pol-delta4 and stalling on encounter with the 5'-blocking oligonucleotides. Pol-delta3 idling process may avoid the formation of a gap, while maintaining a nick that can be readily ligated. Along with DNA polymerase kappa, DNA polymerase delta carries out approximately half of nucleotide excision repair (NER) synthesis following UV irradiation. Under conditions of DNA replication stress, in the presence of POLD3 and POLD4, may catalyze the repair of broken replication forks through break-induced replication (BIR). Involved in the translesion synthesis (TLS) of templates carrying O6-methylguanine, 8oxoG or abasic sites. The chain is DNA polymerase delta catalytic subunit from Homo sapiens (Human).